We begin with the raw amino-acid sequence, 217 residues long: 3,4-dihydroxy-2-butanone 4-phosphate synthase (217 aa).

D-ribulose 5-phosphate is bound by residues 37–38 (RE), Asp-42, 150–154 (RRGHT), and Glu-174. Glu-38 provides a ligand contact to Mg(2+). Residue His-153 participates in Mg(2+) binding.

This sequence belongs to the DHBP synthase family. Homodimer. It depends on Mg(2+) as a cofactor. Requires Mn(2+) as cofactor.

The catalysed reaction is D-ribulose 5-phosphate = (2S)-2-hydroxy-3-oxobutyl phosphate + formate + H(+). The protein operates within cofactor biosynthesis; riboflavin biosynthesis; 2-hydroxy-3-oxobutyl phosphate from D-ribulose 5-phosphate: step 1/1. In terms of biological role, catalyzes the conversion of D-ribulose 5-phosphate to formate and 3,4-dihydroxy-2-butanone 4-phosphate. The polypeptide is 3,4-dihydroxy-2-butanone 4-phosphate synthase (Shewanella putrefaciens (strain CN-32 / ATCC BAA-453)).